Consider the following 274-residue polypeptide: Siroheme biosynthesis protein MET8 (274 aa).

NAD(+) is bound by residues 23–24 (EV), 43–45 (SPD), and phenylalanine 93. Catalysis depends on aspartate 141, which acts as the Proton acceptor.

The protein belongs to the precorrin-2 dehydrogenase / sirohydrochlorin ferrochelatase family. MET8 subfamily. In terms of assembly, homodimer.

The catalysed reaction is precorrin-2 + NAD(+) = sirohydrochlorin + NADH + 2 H(+). It carries out the reaction siroheme + 2 H(+) = sirohydrochlorin + Fe(2+). The protein operates within porphyrin-containing compound metabolism; siroheme biosynthesis; siroheme from sirohydrochlorin: step 1/1. Its pathway is porphyrin-containing compound metabolism; siroheme biosynthesis; sirohydrochlorin from precorrin-2: step 1/1. Catalyzes the conversion of precorrin-2 into siroheme. This reaction consist of the NAD-dependent oxidation of precorrin-2 into sirohydrochlorin and its subsequent ferrochelation into siroheme. This chain is Siroheme biosynthesis protein MET8, found in Saccharomyces cerevisiae (strain ATCC 204508 / S288c) (Baker's yeast).